The primary structure comprises 85 residues: Probable Thioredoxin (85 aa).

Residues 2–85 (VVNIEVFTSP…LFEAINDEME (84 aa)) form the Glutaredoxin domain. An intrachain disulfide couples C13 to C16.

This sequence belongs to the glutaredoxin family.

It is found in the cytoplasm. Acts to maintain redox homeostasis; functions as a protein disulfide reductase. In Methanothermobacter thermautotrophicus (strain ATCC 29096 / DSM 1053 / JCM 10044 / NBRC 100330 / Delta H) (Methanobacterium thermoautotrophicum), this protein is Probable Thioredoxin.